The following is an 873-amino-acid chain: DNA mismatch repair protein MutS (873 aa).

ATP is bound at residue 628–635 (GPNMAGKS).

The protein belongs to the DNA mismatch repair MutS family.

Functionally, this protein is involved in the repair of mismatches in DNA. It is possible that it carries out the mismatch recognition step. This protein has a weak ATPase activity. This Chlorobium chlorochromatii (strain CaD3) protein is DNA mismatch repair protein MutS.